An 84-amino-acid chain; its full sequence is U21-theraphotoxin-Cg1a 1 (84 aa).

An N-terminal signal peptide occupies residues 1-21 (MKVSVLITLAVLGVMFLLTSA). The propeptide occupies 22 to 47 (EERGSDQMDSPAWLKSMEIIFQSEER). Intrachain disulfides connect Cys49/Cys63, Cys56/Cys68, and Cys62/Cys76. Residue Val82 is modified to Valine amide.

It belongs to the neurotoxin 10 (Hwtx-1) family. 05 (F4a) subfamily. Expressed by the venom gland.

It is found in the secreted. Its function is as follows. Probable ion channel inhibitor. The chain is U21-theraphotoxin-Cg1a 1 from Chilobrachys guangxiensis (Chinese earth tiger tarantula).